Reading from the N-terminus, the 234-residue chain is NLP effector protein 10 (234 aa).

A signal peptide spans Met1–Ala17. The N-linked (GlcNAc...) asparagine glycan is linked to Asn65. A Conserved undecapeptide motif I motif is present at residues Ala101–Asp111. A Hepta-peptide GHRHDWE motif II motif is present at residues Gly118 to Glu124.

It belongs to the Necrosis inducing protein (NPP1) family.

It is found in the secreted. Functionally, secreted effector that contributes moderately to virulence during infection by P.capsici. Does not cause visible reaction of C.annuum for several days after inoculation, but by 7 days after inoculation, small necrotic lesions become visible. Leads only to chlorotic areas, without necrosis at 7 days after non-host N.benthamiana leaves infection. The polypeptide is NLP effector protein 10 (Phytophthora capsici).